A 141-amino-acid chain; its full sequence is ATP synthase F(0) complex subunit C2, mitochondrial (141 aa).

A mitochondrion-targeting transit peptide spans 1–66; it reads MYACSKFVST…RSFQTSAISR (66 aa). A helical membrane pass occupies residues 82–102; that stretch reads VGVAGSGAGIGTVFGSLIIGY. Lys-109 is subject to N6,N6,N6-trimethyllysine. A helical membrane pass occupies residues 117 to 137; it reads ILGFALSEAMGLFCLMVAFLI.

The protein belongs to the ATPase C chain family. F-type ATPases have 2 components, CF(1) - the catalytic core - and CF(0) - the membrane proton channel. CF(1) has five subunits: alpha(3), beta(3), gamma(1), delta(1), epsilon(1). CF(0) has three main subunits: a, b and c. Interacts with DNAJC30; interaction is direct. Trimethylated by ATPSCKMT at Lys-109. Methylation is required for proper incorporation of the C subunit into the ATP synthase complex and mitochondrial respiration.

It is found in the mitochondrion membrane. In terms of biological role, mitochondrial membrane ATP synthase (F(1)F(0) ATP synthase or Complex V) produces ATP from ADP in the presence of a proton gradient across the membrane which is generated by electron transport complexes of the respiratory chain. F-type ATPases consist of two structural domains, F(1) - containing the extramembraneous catalytic core and F(0) - containing the membrane proton channel, linked together by a central stalk and a peripheral stalk. During catalysis, ATP synthesis in the catalytic domain of F(1) is coupled via a rotary mechanism of the central stalk subunits to proton translocation. Part of the complex F(0) domain. A homomeric c-ring of probably 10 subunits is part of the complex rotary element. The protein is ATP synthase F(0) complex subunit C2, mitochondrial of Rattus norvegicus (Rat).